The chain runs to 491 residues: Cytochrome P450 monooxygenase 521A1 (491 aa).

A helical transmembrane segment spans residues 1-21; that stretch reads MILLTLLYLIIFYIIIDFIKK. Residue Cys-438 participates in heme binding.

Belongs to the cytochrome P450 family. Heme serves as cofactor.

It is found in the membrane. It catalyses the reaction discoidol + reduced [NADPH--hemoprotein reductase] + O2 = discodiene + acetone + oxidized [NADPH--hemoprotein reductase] + 2 H2O + H(+). It functions in the pathway sesquiterpene biosynthesis. Its function is as follows. Cytochrome P450 monooxygenase; part of the gene cluster that mediates the biosynthesis of the trisnorsesquiterpene discodiene which has a function during later stages of multicellular development, during the transition from fingers to Mexican hats. The terpene synthase tps8 converts its substrate farnesyl diphosphate (FDP) into the bicyclic sesquiterpene alcohol discoidol. The cytochrome P450 monooxygenase cyp521A1 then catalyzes the oxidative degradation of discoidol to form the trisnorsesquiterpene discodiene. In Dictyostelium discoideum (Social amoeba), this protein is Cytochrome P450 monooxygenase 521A1 (cyp521A1).